The chain runs to 335 residues: Ketol-acid reductoisomerase (NADP(+)) 2 (335 aa).

Residues 1–180 (MKTYYEQDAN…GCTRAGVIET (180 aa)) form the KARI N-terminal Rossmann domain. NADP(+) is bound by residues 24-27 (YGSQ), Arg47, Ser51, and 81-84 (DEQQ). His106 is an active-site residue. Gly132 is a binding site for NADP(+). The 146-residue stretch at 181-326 (TFQEETETDL…EELREMMSWI (146 aa)) folds into the KARI C-terminal knotted domain. Residues Asp189, Glu193, Glu225, and Glu229 each coordinate Mg(2+). Residue Ser250 coordinates substrate.

The protein belongs to the ketol-acid reductoisomerase family. Mg(2+) serves as cofactor.

The enzyme catalyses (2R)-2,3-dihydroxy-3-methylbutanoate + NADP(+) = (2S)-2-acetolactate + NADPH + H(+). It catalyses the reaction (2R,3R)-2,3-dihydroxy-3-methylpentanoate + NADP(+) = (S)-2-ethyl-2-hydroxy-3-oxobutanoate + NADPH + H(+). It participates in amino-acid biosynthesis; L-isoleucine biosynthesis; L-isoleucine from 2-oxobutanoate: step 2/4. Its pathway is amino-acid biosynthesis; L-valine biosynthesis; L-valine from pyruvate: step 2/4. Its function is as follows. Involved in the biosynthesis of branched-chain amino acids (BCAA). Catalyzes an alkyl-migration followed by a ketol-acid reduction of (S)-2-acetolactate (S2AL) to yield (R)-2,3-dihydroxy-isovalerate. In the isomerase reaction, S2AL is rearranged via a Mg-dependent methyl migration to produce 3-hydroxy-3-methyl-2-ketobutyrate (HMKB). In the reductase reaction, this 2-ketoacid undergoes a metal-dependent reduction by NADPH to yield (R)-2,3-dihydroxy-isovalerate. The protein is Ketol-acid reductoisomerase (NADP(+)) 2 of Bacillus thuringiensis subsp. konkukian (strain 97-27).